The sequence spans 155 residues: UPF0178 protein Gmet_1725 (155 aa).

This sequence belongs to the UPF0178 family.

This Geobacter metallireducens (strain ATCC 53774 / DSM 7210 / GS-15) protein is UPF0178 protein Gmet_1725.